Consider the following 377-residue polypeptide: Nitric oxide reductase FlRd-NAD(+) reductase (377 aa).

The protein belongs to the FAD-dependent oxidoreductase family. Requires FAD as cofactor.

It is found in the cytoplasm. The catalysed reaction is 2 reduced [nitric oxide reductase rubredoxin domain] + NAD(+) + H(+) = 2 oxidized [nitric oxide reductase rubredoxin domain] + NADH. It functions in the pathway nitrogen metabolism; nitric oxide reduction. In terms of biological role, one of at least two accessory proteins for anaerobic nitric oxide (NO) reductase. Reduces the rubredoxin moiety of NO reductase. This Salmonella gallinarum (strain 287/91 / NCTC 13346) protein is Nitric oxide reductase FlRd-NAD(+) reductase.